The chain runs to 289 residues: Thioredoxin-like protein 1 (289 aa).

The Thioredoxin domain maps to 2–109 (VGVKPVGSDP…EEKIKQHLEN (108 aa)). Residues cysteine 34 and cysteine 37 are joined by a disulfide bond. Serine 113 carries the phosphoserine modification. One can recognise a PITH domain in the interval 115-285 (EDTDIPKGYM…NDFKRVVGKK (171 aa)).

In terms of assembly, component of the 19S regulatory cap of the 26S proteasome. Interacts with PSMD14/RPN11. Interacts with, and reduces EEF1A1.

The protein localises to the cytoplasm. Its subcellular location is the nucleus. Active thioredoxin with a redox potential of about -250 mV. This Rattus norvegicus (Rat) protein is Thioredoxin-like protein 1 (Txnl1).